The following is a 267-amino-acid chain: Hydroxyethylthiazole kinase (267 aa).

Substrate is bound at residue Met48. Positions 124 and 170 each coordinate ATP. Gly197 is a binding site for substrate.

Belongs to the Thz kinase family. Requires Mg(2+) as cofactor.

The catalysed reaction is 5-(2-hydroxyethyl)-4-methylthiazole + ATP = 4-methyl-5-(2-phosphooxyethyl)-thiazole + ADP + H(+). Its pathway is cofactor biosynthesis; thiamine diphosphate biosynthesis; 4-methyl-5-(2-phosphoethyl)-thiazole from 5-(2-hydroxyethyl)-4-methylthiazole: step 1/1. Functionally, catalyzes the phosphorylation of the hydroxyl group of 4-methyl-5-beta-hydroxyethylthiazole (THZ). The polypeptide is Hydroxyethylthiazole kinase (Aliivibrio fischeri (strain ATCC 700601 / ES114) (Vibrio fischeri)).